The following is a 419-amino-acid chain: Serine hydroxymethyltransferase (419 aa).

Residues L120 and 124–126 contribute to the (6S)-5,6,7,8-tetrahydrofolate site; that span reads GHL. K229 carries the post-translational modification N6-(pyridoxal phosphate)lysine.

It belongs to the SHMT family. Homodimer. The cofactor is pyridoxal 5'-phosphate.

Its subcellular location is the cytoplasm. The catalysed reaction is (6R)-5,10-methylene-5,6,7,8-tetrahydrofolate + glycine + H2O = (6S)-5,6,7,8-tetrahydrofolate + L-serine. Its pathway is one-carbon metabolism; tetrahydrofolate interconversion. It participates in amino-acid biosynthesis; glycine biosynthesis; glycine from L-serine: step 1/1. In terms of biological role, catalyzes the reversible interconversion of serine and glycine with tetrahydrofolate (THF) serving as the one-carbon carrier. This reaction serves as the major source of one-carbon groups required for the biosynthesis of purines, thymidylate, methionine, and other important biomolecules. Also exhibits THF-independent aldolase activity toward beta-hydroxyamino acids, producing glycine and aldehydes, via a retro-aldol mechanism. The chain is Serine hydroxymethyltransferase from Herpetosiphon aurantiacus (strain ATCC 23779 / DSM 785 / 114-95).